Reading from the N-terminus, the 309-residue chain is NADH-quinone oxidoreductase subunit C (309 aa).

The segment at 198–309 (LPGDEKAVPP…RTRKKKEDGE (112 aa)) is disordered. The segment covering 220–230 (TKGDAKADVPK) has biased composition (basic and acidic residues). Residues 246-261 (DAAAKPVAEAAAPAAT) show a composition bias toward low complexity.

This sequence belongs to the complex I 30 kDa subunit family. As to quaternary structure, NDH-1 is composed of 14 different subunits. Subunits NuoB, C, D, E, F, and G constitute the peripheral sector of the complex.

Its subcellular location is the cell inner membrane. It carries out the reaction a quinone + NADH + 5 H(+)(in) = a quinol + NAD(+) + 4 H(+)(out). In terms of biological role, NDH-1 shuttles electrons from NADH, via FMN and iron-sulfur (Fe-S) centers, to quinones in the respiratory chain. The immediate electron acceptor for the enzyme in this species is believed to be ubiquinone. Couples the redox reaction to proton translocation (for every two electrons transferred, four hydrogen ions are translocated across the cytoplasmic membrane), and thus conserves the redox energy in a proton gradient. In Novosphingobium aromaticivorans (strain ATCC 700278 / DSM 12444 / CCUG 56034 / CIP 105152 / NBRC 16084 / F199), this protein is NADH-quinone oxidoreductase subunit C.